The primary structure comprises 1951 residues: [F-actin]-monooxygenase MICAL2 (1951 aa).

The interval 2–494 (GENEDEKQAQ…KHLYITKEMD (493 aa)) is monooxygenase domain. FAD is bound by residues Cys97, 116–118 (EKR), 123–125 (RNN), Phe183, Tyr298, and Asp398. A Calponin-homology (CH) domain is found at 516-619 (DIRPNKLLTW…MVMYLSKFYE (104 aa)). Phosphoserine is present on Ser631. The Nuclear localization signal signature appears at 660–681 (RKRTPRVDTQTEENDMNKRRRQ). 2 disordered regions span residues 663–712 (TPRV…SQNK) and 891–921 (KRVPHAHPPSPPSCLPSPHPAAASSPPAADS). Residues 691-700 (SFSSRSLGSS) show a composition bias toward low complexity. The segment covering 896-909 (AHPPSPPSCLPSPH) has biased composition (pro residues). Positions 910 to 921 (PAAASSPPAADS) are enriched in low complexity. The LIM zinc-binding domain occupies 991-1053 (DTCYFCKKRV…KPHFVHCKTS (63 aa)). Cys993, Cys996, His1014, Cys1017, Cys1020, Cys1023, Cys1043, and His1046 together coordinate Zn(2+). Phosphoserine is present on Thr1052. Disordered regions lie at residues 1054 to 1141 (SKQR…RISP), 1158 to 1314 (TSED…VSPT), 1348 to 1368 (VEPGRESLRSPEEISSSEGCQ), 1383 to 1427 (ILGK…RKLG), 1451 to 1476 (HKTGEQLSQESAENIRGGSLKPTCSS), 1489 to 1580 (QKKA…AKKA), 1594 to 1624 (AQASDLSLPNSILRSRSLPSRPSKMFFSTTP), 1678 to 1697 (GDFFNSPKEEGPPGNRVPSL), 1706 to 1731 (STSMGQVAHPSSTGQDARKLEGGEGG), and 1747 to 1766 (PVTEATSSPTSSSAEEEADS). Over residues 1061 to 1070 (AELNQQREEE) the composition is skewed to basic and acidic residues. 3 stretches are compositionally biased toward polar residues: residues 1129-1138 (PRPSEWTSVR), 1228-1239 (HSLQSPTPSKYQ), and 1246-1256 (QSNSTPMNQRA). A compositionally biased stretch (pro residues) spans 1257–1268 (PSPPKEPPPPPS). The span at 1269–1285 (LSSSSSLPSSFSSASVP) shows a compositional bias: low complexity. A compositionally biased stretch (polar residues) spans 1291-1306 (DSSSPQVTYNLHSPQI). The segment at 1314 to 1353 (TPIYLRRARAQGIVKEIPLYLPHSPMLESTEDCLVEPGRE) is interaction with MAPK1. A compositionally biased stretch (basic and acidic residues) spans 1350–1359 (PGRESLRSPE). Residues 1532–1545 (EAGKKTSPKPESKT) show a composition bias toward basic and acidic residues. Low complexity predominate over residues 1599 to 1616 (LSLPNSILRSRSLPSRPS). A compositionally biased stretch (basic and acidic residues) spans 1678 to 1688 (GDFFNSPKEEG). Ser1683 carries the phosphoserine modification. Residues 1706-1720 (STSMGQVAHPSSTGQ) are compositionally biased toward polar residues. Residues 1749 to 1759 (TEATSSPTSSS) show a composition bias toward low complexity. A bMERB domain is found at 1789-1939 (KQEELKRLHK…ERTQDQHFEN (151 aa)).

It belongs to the Mical family. As to quaternary structure, interacts with PLXNA4. Interacts with RAB1B. Interacts with MAPK1/ERK2. Interacts with RAB1B, RAB35, RAB8A, RAB10, RAB13 and RAB15 (in their GTP-bound forms); binding to RAB1B and RAB35 is of low affinity compared to other Rab proteins; binding to RAB1B and RAB35 is of low affinity compared to other Rab proteins; at least in case of RAB8A may bind 2 molecules of RAB8A simultaneously through a high and a low affinity binding site, respectively. FAD serves as cofactor. As to expression, expressed only in testis (at protein level).

It is found in the cytoplasm. It localises to the nucleus. It catalyses the reaction L-methionyl-[F-actin] + NADPH + O2 + H(+) = L-methionyl-(R)-S-oxide-[F-actin] + NADP(+) + H2O. Methionine monooxygenase that promotes depolymerization of F-actin by mediating oxidation of residues 'Met-44' and 'Met-47' on actin to form methionine-sulfoxide, resulting in actin filament disassembly and preventing repolymerization. Regulates the disassembly of branched actin networks also by oxidizing ARP3B-containing ARP2/3 complexes leading to ARP3B dissociation from the network. Acts as a key regulator of the SRF signaling pathway elicited by nerve growth factor and serum: mediates oxidation and subsequent depolymerization of nuclear actin, leading to increase MKL1/MRTF-A presence in the nucleus and promote SRF:MKL1/MRTF-A-dependent gene transcription. Does not activate SRF:MKL1/MRTF-A through RhoA. The sequence is that of [F-actin]-monooxygenase MICAL2 from Mus musculus (Mouse).